The chain runs to 126 residues: MRSTLLFAVILALSSARSLGAVCEESQEQVVPGGGHSKKDSNLYQLPPSLLRRLYDSRVVSLDGLLKMLSKASVGPKESPLPQKRDMHDFFVGLMGKRNLQPDTPVDINQENIPSFGTFKYPPSVE.

The first 20 residues, 1–20, serve as a signal peptide directing secretion; sequence MRSTLLFAVILALSSARSLG. Positions 21 to 83 are excised as a propeptide; sequence AVCEESQEQV…VGPKESPLPQ (63 aa). The residue at position 95 (methionine 95) is a Methionine amide. A propeptide spanning residues 99–126 is cleaved from the precursor; that stretch reads NLQPDTPVDINQENIPSFGTFKYPPSVE. A disordered region spans residues 102–126; the sequence is PDTPVDINQENIPSFGTFKYPPSVE.

The protein belongs to the tachykinin family.

The protein localises to the secreted. Tachykinins are active peptides which excite neurons, evoke behavioral responses, are potent vasodilators and secretagogues, and contract (directly or indirectly) many smooth muscles. Is a critical central regulator of gonadal function. The protein is Tachykinin-3 (TAC3) of Bos taurus (Bovine).